A 173-amino-acid polypeptide reads, in one-letter code: Ribosome maturation factor RimM (173 aa).

One can recognise a PRC barrel domain in the interval 94-168 (SNESYLCDLL…LIRINPPKGL (75 aa)).

It belongs to the RimM family. In terms of assembly, binds ribosomal protein uS19.

The protein localises to the cytoplasm. An accessory protein needed during the final step in the assembly of 30S ribosomal subunit, possibly for assembly of the head region. Essential for efficient processing of 16S rRNA. May be needed both before and after RbfA during the maturation of 16S rRNA. It has affinity for free ribosomal 30S subunits but not for 70S ribosomes. This chain is Ribosome maturation factor RimM, found in Lawsonia intracellularis (strain PHE/MN1-00).